The chain runs to 439 residues: Ribosomal protein uS12 methylthiotransferase RimO (439 aa).

An MTTase N-terminal domain is found at 5–116 (PTIAISHLGC…IVNVIERVEL (112 aa)). Residues C14, C50, C79, C154, C158, and C161 each coordinate [4Fe-4S] cluster. In terms of domain architecture, Radical SAM core spans 140–369 (TTTEGVAYLR…MELQQPISQK (230 aa)). A TRAM domain is found at 372-438 (QQEVGKIVDV…TYDLYGQVVN (67 aa)).

Belongs to the methylthiotransferase family. RimO subfamily. The cofactor is [4Fe-4S] cluster.

It localises to the cytoplasm. It catalyses the reaction L-aspartate(89)-[ribosomal protein uS12]-hydrogen + (sulfur carrier)-SH + AH2 + 2 S-adenosyl-L-methionine = 3-methylsulfanyl-L-aspartate(89)-[ribosomal protein uS12]-hydrogen + (sulfur carrier)-H + 5'-deoxyadenosine + L-methionine + A + S-adenosyl-L-homocysteine + 2 H(+). Its function is as follows. Catalyzes the methylthiolation of an aspartic acid residue of ribosomal protein uS12. The sequence is that of Ribosomal protein uS12 methylthiotransferase RimO from Nostoc punctiforme (strain ATCC 29133 / PCC 73102).